Consider the following 365-residue polypeptide: Parathion hydrolase (365 aa).

A signal peptide (tat-type signal) is located at residues 1-29 (MQTRRVVLKSAAAAGTLLGGLAGCASVAG). Zn(2+)-binding residues include H55, H57, K169, H201, H230, and D301. Position 169 is an N6-carboxylysine (K169).

The protein belongs to the metallo-dependent hydrolases superfamily. Phosphotriesterase family. As to quaternary structure, homodimer. It depends on Zn(2+) as a cofactor. In terms of processing, predicted to be exported by the Tat system. The position of the signal peptide cleavage has been experimentally proven.

Its subcellular location is the cell membrane. The enzyme catalyses An aryl dialkyl phosphate + H2O = dialkyl phosphate + an aryl alcohol.. In terms of biological role, has an unusual substrate specificity for synthetic organophosphate triesters and phosphorofluoridates. All of the phosphate triesters found to be substrates are synthetic compounds. The identity of any naturally occurring substrate for the enzyme is unknown. Has no detectable activity with phosphate monoesters or diesters and no activity as an esterase or protease. It catalyzes the hydrolysis of the insecticide paraoxon at a rate approaching the diffusion limit and thus appears to be optimally evolved for utilizing this synthetic substrate. In Brevundimonas diminuta (Pseudomonas diminuta), this protein is Parathion hydrolase (opd).